The primary structure comprises 197 residues: Superoxide dismutase [Fe] (197 aa).

Residues histidine 26, histidine 75, aspartate 157, and histidine 161 each contribute to the Fe cation site.

This sequence belongs to the iron/manganese superoxide dismutase family. Homotetramer. Requires Fe cation as cofactor.

The enzyme catalyses 2 superoxide + 2 H(+) = H2O2 + O2. Functionally, destroys superoxide anion radicals which are normally produced within the cells and which are toxic to biological systems. The chain is Superoxide dismutase [Fe] from Cupriavidus metallidurans (strain ATCC 43123 / DSM 2839 / NBRC 102507 / CH34) (Ralstonia metallidurans).